Here is a 647-residue protein sequence, read N- to C-terminus: LIM domain kinase 1 (647 aa).

2 consecutive LIM zinc-binding domains span residues 25–75 and 84–137; these read CASC…CKKD and CHGC…CGHC. One can recognise a PDZ domain in the interval 165-258; that stretch reads LVSIPASSHG…LLQLTLEHDP (94 aa). A Phosphoserine modification is found at serine 210. The residue at position 229 (threonine 229) is a Phosphothreonine. The interval 260–319 is disordered; that stretch reads DTLGHGLGPETSPLSSPAYTPSGEAGSSARQKPVLRSCSIDRSPGAGSLGSPASQRKDLG. Phosphoserine is present on residues serine 298, serine 302, serine 307, and serine 310. Positions 302–313 are enriched in low complexity; that stretch reads SPGAGSLGSPAS. A Phosphoserine; by MAPKAPK2 modification is found at serine 323. Phosphoserine is present on serine 337. The Protein kinase domain maps to 339–604; the sequence is LIHGEVLGKG…PSFVKLEHWL (266 aa). Residues 345-353 and lysine 368 contribute to the ATP site; that span reads LGKGCFGQA. Aspartate 460 is an active-site residue. Position 508 is a phosphothreonine; by ROCK1 and PAK1 (threonine 508).

Belongs to the protein kinase superfamily. TKL Ser/Thr protein kinase family. In terms of assembly, interacts (via LIM domain) with the cytoplasmic domain of NRG1. Interacts with NISCH. Interacts with RLIM and RNF6. Self-associates to form homodimers. Interacts with HSP90AA1; this interaction promotes LIMK1 dimerization and subsequent transphosphorylation. Interacts with CDKN1C. Interacts with SSH1. Interacts with ROCK1. Interacts (via LIM zinc-binding domains) with FAM89B/LRAP25 (via LRR repeat). Forms a tripartite complex with CDC42BPA, CDC42BPB and FAM89B/LRAP25. Autophosphorylated. Phosphorylated on Thr-508 by ROCK1 and PAK1, resulting in activation. Phosphorylated by PAK4 which increases the ability of LIMK1 to phosphorylate cofilin. Phosphorylated at Ser-323 by MAPKAPK2 during activation of VEGFA-induced signaling, which results in activation of LIMK1 and promotion of actin reorganization, cell migration, and tubule formation of endothelial cells. Dephosphorylated and inactivated by SSH1. Phosphorylated by CDC42BP. In terms of processing, ubiquitinated. 'Lys-48'-linked polyubiquitination by RNF6 leads to proteasomal degradation through the 26S proteasome, modulating LIMK1 levels in the growth cone and its effect on axonal outgrowth. Also polyubiquitinated by RLIM. Highest expression in both adult and fetal nervous system. Detected ubiquitously throughout the different regions of adult brain, with highest levels in the cerebral cortex. Expressed to a lesser extent in heart and skeletal muscle.

It localises to the cytoplasm. It is found in the nucleus. Its subcellular location is the cytoskeleton. The protein localises to the cell projection. The protein resides in the lamellipodium. It catalyses the reaction L-seryl-[protein] + ATP = O-phospho-L-seryl-[protein] + ADP + H(+). The catalysed reaction is L-threonyl-[protein] + ATP = O-phospho-L-threonyl-[protein] + ADP + H(+). In terms of biological role, serine/threonine-protein kinase that plays an essential role in the regulation of actin filament dynamics. Acts downstream of several Rho family GTPase signal transduction pathways. Activated by upstream kinases including ROCK1, PAK1 and PAK4, which phosphorylate LIMK1 on a threonine residue located in its activation loop. LIMK1 subsequently phosphorylates and inactivates the actin binding/depolymerizing factors cofilin-1/CFL1, cofilin-2/CFL2 and destrin/DSTN, thereby preventing the cleavage of filamentous actin (F-actin), and stabilizing the actin cytoskeleton. In this way LIMK1 regulates several actin-dependent biological processes including cell motility, cell cycle progression, and differentiation. Phosphorylates TPPP on serine residues, thereby promoting microtubule disassembly. Stimulates axonal outgrowth and may be involved in brain development. Functionally, has a dominant negative effect on actin cytoskeletal changes. Required for atypical chemokine receptor ACKR2-induced phosphorylation of cofilin (CFL1). The protein is LIM domain kinase 1 (LIMK1) of Homo sapiens (Human).